Reading from the N-terminus, the 152-residue chain is uncharacterized protein (152 aa).

4 helical membrane passes run 2–22 (ENLI…LSFL), 26–46 (FITF…HLIE), 92–112 (VVPI…FILL), and 128–148 (YIIT…YFLK).

It is found in the membrane. This is an uncharacterized protein from Acanthamoeba polyphaga mimivirus (APMV).